Consider the following 621-residue polypeptide: MBT domain-containing protein 1 (621 aa).

Positions 1–21 (MEKTKDPADRSSRSERKRRDS) are enriched in basic and acidic residues. Residues 1–55 (MEKTKDPADRSSRSERKRRDSFGMFDGYDSCSEDTSSSSSSDESEEEVAPLPSSL) are disordered. Residues 29-41 (DSCSEDTSSSSSS) are compositionally biased toward low complexity. The FCS-type zinc finger occupies 68–103 (PDGKSGMATCEMCGMVGVRDAFYSKTKRFCSVSCSR). 4 residues coordinate Zn(2+): Cys-77, Cys-80, Cys-97, and Cys-101. 4 MBT repeats span residues 164-268 (FSWG…LVPP), 276-373 (TNWK…IGHR), 374-479 (FKRT…LTPP), and 487-583 (FKWF…LQPP). The tract at residues 581 to 621 (QPPAPQSNKDGQSNVSKQKKKSKSQPYKGHKKNFRKPGNRP) is disordered. Basic residues predominate over residues 597–621 (KQKKKSKSQPYKGHKKNFRKPGNRP).

In terms of assembly, monomer. Component of the NuA4 histone acetyltransferase complex.

It is found in the nucleus. Its subcellular location is the chromosome. Its function is as follows. Chromatin reader component of the NuA4 histone acetyltransferase complex, a multiprotein complex involved in transcriptional activation of select genes principally by acetylation of nucleosomal histones H4 and H2A. The NuA4 complex plays a direct role in repair of DNA double-strand breaks (DSBs) by promoting homologous recombination (HR). MBTD1 specifically recognizes and binds monomethylated and dimethylated 'Lys-20' on histone H4 (H4K20me1 and H4K20me2, respectively). In the NuA4 complex, MBTD1 promotes recruitment of the complex to H4K20me marks by competing with TP53BP1 for binding to H4K20me. Following recruitment to H4K20me at DNA breaks, the NuA4 complex catalyzes acetylation of 'Lys-15' on histone H2A (H2AK15), blocking the ubiquitination mark required for TP53BP1 localization at DNA breaks, thereby promoting homologous recombination (HR). The protein is MBT domain-containing protein 1 of Xenopus laevis (African clawed frog).